A 527-amino-acid chain; its full sequence is Probable bifunctional tRNA threonylcarbamoyladenosine biosynthesis protein (527 aa).

Residues 1–324 (MIVLGLEGTA…YRIDEVDAPW (324 aa)) form a kae1 region. Fe cation is bound by residues H107, H111, and Y128. L-threonylcarbamoyladenylate-binding positions include 128-132 (YVSGG), D160, G173, E177, and N257. A Fe cation-binding site is contributed by D285. The 198-residue stretch at 330–527 (VKYRDAGAES…EDIRRRHRYV (198 aa)) folds into the Protein kinase domain. ATP-binding positions include 333-341 (RDAGAESRI) and K354. Catalysis depends on D445, which acts as the Proton acceptor; for kinase activity.

In the N-terminal section; belongs to the KAE1 / TsaD family. This sequence in the C-terminal section; belongs to the protein kinase superfamily. Tyr protein kinase family. BUD32 subfamily. As to quaternary structure, component of the KEOPS complex that consists of Kae1, Bud32, Cgi121 and Pcc1; the whole complex dimerizes. Requires Fe(2+) as cofactor.

The protein localises to the cytoplasm. The enzyme catalyses L-seryl-[protein] + ATP = O-phospho-L-seryl-[protein] + ADP + H(+). The catalysed reaction is L-threonyl-[protein] + ATP = O-phospho-L-threonyl-[protein] + ADP + H(+). It catalyses the reaction L-threonylcarbamoyladenylate + adenosine(37) in tRNA = N(6)-L-threonylcarbamoyladenosine(37) in tRNA + AMP + H(+). In terms of biological role, required for the formation of a threonylcarbamoyl group on adenosine at position 37 (t(6)A37) in tRNAs that read codons beginning with adenine. Is a component of the KEOPS complex that is probably involved in the transfer of the threonylcarbamoyl moiety of threonylcarbamoyl-AMP (TC-AMP) to the N6 group of A37. The Kae1 domain likely plays a direct catalytic role in this reaction. The Bud32 domain probably displays kinase activity that regulates Kae1 function. This is Probable bifunctional tRNA threonylcarbamoyladenosine biosynthesis protein from Thermoplasma volcanium (strain ATCC 51530 / DSM 4299 / JCM 9571 / NBRC 15438 / GSS1).